Here is a 1334-residue protein sequence, read N- to C-terminus: Rho1 guanine nucleotide exchange factor 1 (1334 aa).

Disordered stretches follow at residues 1–89, 135–182, 203–245, and 381–402; these read MDYR…ASPV, PQVS…SDSV, LDQN…TSGT, and SLIN…ASSP. Residues 138 to 149 show a composition bias toward low complexity; the sequence is SNHAPNNSNSPS. Polar residues predominate over residues 150–164; sequence LTWHTSSGDDSNQNP. Low complexity predominate over residues 170-180; sequence QSQSSTSPVSD. Polar residues-rich tracts occupy residues 213–227, 234–245, and 381–400; these read VRSS…NSRL, HTVGSHSFTSGT, and SLIN…SEAS. A Phosphoserine modification is found at S381. In terms of domain architecture, DH spans 621–808; it reads KRQEVICEVI…RGFLSRLNVE (188 aa). Positions 843-973 constitute a PH domain; it reads QLIFKGPLKK…WLEHIDNQQT (131 aa). Residues 995–1293 form the CNH domain; sequence DNKVNAIGVY…RLLADGRGKL (299 aa).

It localises to the cytoplasm. Stimulates the exchange of Rho1 and Rho5 GDP-bound form into GTP-bound form. Controls septum formation, cell wall synthesis and localization of F-actin patches. Coordinates actin deposition with cell wall biosynthesis during bipolar growth. The polypeptide is Rho1 guanine nucleotide exchange factor 1 (rgf1) (Schizosaccharomyces pombe (strain 972 / ATCC 24843) (Fission yeast)).